The sequence spans 254 residues: 3-deoxy-manno-octulosonate cytidylyltransferase (254 aa).

Belongs to the KdsB family.

Its subcellular location is the cytoplasm. It catalyses the reaction 3-deoxy-alpha-D-manno-oct-2-ulosonate + CTP = CMP-3-deoxy-beta-D-manno-octulosonate + diphosphate. Its pathway is nucleotide-sugar biosynthesis; CMP-3-deoxy-D-manno-octulosonate biosynthesis; CMP-3-deoxy-D-manno-octulosonate from 3-deoxy-D-manno-octulosonate and CTP: step 1/1. It participates in bacterial outer membrane biogenesis; lipopolysaccharide biosynthesis. Activates KDO (a required 8-carbon sugar) for incorporation into bacterial lipopolysaccharide in Gram-negative bacteria. The sequence is that of 3-deoxy-manno-octulosonate cytidylyltransferase from Pseudoalteromonas atlantica (strain T6c / ATCC BAA-1087).